We begin with the raw amino-acid sequence, 267 residues long: Large ribosomal subunit protein bL9m (267 aa).

A mitochondrion-targeting transit peptide spans 1–52 (MAAPVVTAPGRALLRAGAGRLLRGGVQELLRPRHEGNAPDLACNFSLSQNRG).

This sequence belongs to the bacterial ribosomal protein bL9 family. Component of the mitochondrial large ribosomal subunit (mt-LSU). Mature mammalian 55S mitochondrial ribosomes consist of a small (28S) and a large (39S) subunit. The 28S small subunit contains a 12S ribosomal RNA (12S mt-rRNA) and 30 different proteins. The 39S large subunit contains a 16S rRNA (16S mt-rRNA), a copy of mitochondrial valine transfer RNA (mt-tRNA(Val)), which plays an integral structural role, and 52 different proteins.

The protein resides in the mitochondrion. The protein is Large ribosomal subunit protein bL9m (MRPL9) of Homo sapiens (Human).